Reading from the N-terminus, the 227-residue chain is Large ribosomal subunit protein bL25 (227 aa).

The disordered stretch occupies residues 199-227 (AIAEAQSAEAAEEKAEESAEDEKKDGEEA). Positions 209 to 227 (AEEKAEESAEDEKKDGEEA) are enriched in basic and acidic residues.

Belongs to the bacterial ribosomal protein bL25 family. CTC subfamily. In terms of assembly, part of the 50S ribosomal subunit; part of the 5S rRNA/L5/L18/L25 subcomplex. Contacts the 5S rRNA. Binds to the 5S rRNA independently of L5 and L18.

This is one of the proteins that binds to the 5S RNA in the ribosome where it forms part of the central protuberance. The sequence is that of Large ribosomal subunit protein bL25 from Methylobacterium radiotolerans (strain ATCC 27329 / DSM 1819 / JCM 2831 / NBRC 15690 / NCIMB 10815 / 0-1).